A 207-amino-acid polypeptide reads, in one-letter code: Octanoyltransferase (207 aa).

Residues 27–202 enclose the BPL/LPL catalytic domain; sequence GETPDELWIV…HLETRLARPQ (176 aa). Residues 66-73, 133-135, and 146-148 contribute to the substrate site; these read RGGQITYH, SLG, and GLS. C164 acts as the Acyl-thioester intermediate in catalysis.

The protein belongs to the LipB family.

The protein localises to the cytoplasm. The catalysed reaction is octanoyl-[ACP] + L-lysyl-[protein] = N(6)-octanoyl-L-lysyl-[protein] + holo-[ACP] + H(+). It functions in the pathway protein modification; protein lipoylation via endogenous pathway; protein N(6)-(lipoyl)lysine from octanoyl-[acyl-carrier-protein]: step 1/2. Catalyzes the transfer of endogenously produced octanoic acid from octanoyl-acyl-carrier-protein onto the lipoyl domains of lipoate-dependent enzymes. Lipoyl-ACP can also act as a substrate although octanoyl-ACP is likely to be the physiological substrate. This Laribacter hongkongensis (strain HLHK9) protein is Octanoyltransferase.